The sequence spans 448 residues: Tubulin beta chain (448 aa).

Glutamine 11, glutamate 69, serine 138, glycine 142, threonine 143, glycine 144, asparagine 204, and asparagine 226 together coordinate GTP. A Mg(2+)-binding site is contributed by glutamate 69. Residues 425-448 (YQDAGVDEEEEEYDEEAPVEEPLE) are disordered. Residues 429 to 448 (GVDEEEEEYDEEAPVEEPLE) are compositionally biased toward acidic residues.

It belongs to the tubulin family. Dimer of alpha and beta chains. A typical microtubule is a hollow water-filled tube with an outer diameter of 25 nm and an inner diameter of 15 nM. Alpha-beta heterodimers associate head-to-tail to form protofilaments running lengthwise along the microtubule wall with the beta-tubulin subunit facing the microtubule plus end conferring a structural polarity. Microtubules usually have 13 protofilaments but different protofilament numbers can be found in some organisms and specialized cells. It depends on Mg(2+) as a cofactor.

The protein localises to the cytoplasm. The protein resides in the cytoskeleton. In terms of biological role, tubulin is the major constituent of microtubules, a cylinder consisting of laterally associated linear protofilaments composed of alpha- and beta-tubulin heterodimers. Microtubules grow by the addition of GTP-tubulin dimers to the microtubule end, where a stabilizing cap forms. Below the cap, tubulin dimers are in GDP-bound state, owing to GTPase activity of alpha-tubulin. The chain is Tubulin beta chain from Metarhizium anisopliae (Entomophthora anisopliae).